Consider the following 74-residue polypeptide: EMBRYO SURROUNDING FACTOR 1-like protein 4 (74 aa).

A signal peptide spans 1 to 22 (MKSSHAYLVCILLLSLFSLHQC). Cystine bridges form between Cys36–Cys51, Cys41–Cys70, Cys49–Cys66, and Cys52–Cys59.

This sequence belongs to the MEG family. In terms of tissue distribution, expressed in flowers.

This is EMBRYO SURROUNDING FACTOR 1-like protein 4 (ESFL4) from Arabidopsis thaliana (Mouse-ear cress).